A 266-amino-acid chain; its full sequence is Probable carboxylesterase Os04g0669500 (266 aa).

Catalysis depends on charge relay system residues S154, D208, and H240.

It belongs to the AB hydrolase superfamily. AB hydrolase 2 family.

In terms of biological role, possesses carboxylesterase activity in vitro. In Oryza sativa subsp. japonica (Rice), this protein is Probable carboxylesterase Os04g0669500.